Consider the following 738-residue polypeptide: Conserved oligomeric Golgi complex subunit 4 (738 aa).

It belongs to the COG4 family. Component of the conserved oligomeric Golgi complex which is composed of eight different subunits and is required for normal Golgi morphology and localization. Interacts with COG2 and COG3.

It localises to the golgi apparatus membrane. Functionally, required for normal Golgi function. The protein is Conserved oligomeric Golgi complex subunit 4 of Arabidopsis thaliana (Mouse-ear cress).